A 110-amino-acid polypeptide reads, in one-letter code: Nucleoid-associated protein YpAngola_A2890 (110 aa).

The tract at residues 90–110 is disordered; sequence KEKMASVSNGMQLPPGFKMPF.

It belongs to the YbaB/EbfC family. In terms of assembly, homodimer.

The protein resides in the cytoplasm. It is found in the nucleoid. Binds to DNA and alters its conformation. May be involved in regulation of gene expression, nucleoid organization and DNA protection. The sequence is that of Nucleoid-associated protein YpAngola_A2890 from Yersinia pestis bv. Antiqua (strain Angola).